The primary structure comprises 282 residues: Acetyl-coenzyme A carboxylase carboxyl transferase subunit beta (282 aa).

The 254-residue stretch at 29–282 folds into the CoA carboxyltransferase N-terminal domain; the sequence is LPINCPSCSA…LSSLLGLHQG (254 aa). Positions 33, 36, 52, and 55 each coordinate Zn(2+). The C4-type zinc finger occupies 33-55; that stretch reads CPSCSARIAAEALQRNLKVCPKC.

The protein belongs to the AccD/PCCB family. Acetyl-CoA carboxylase is a heterohexamer composed of biotin carboxyl carrier protein (AccB), biotin carboxylase (AccC) and two subunits each of ACCase subunit alpha (AccA) and ACCase subunit beta (AccD). Zn(2+) is required as a cofactor.

It is found in the cytoplasm. It carries out the reaction N(6)-carboxybiotinyl-L-lysyl-[protein] + acetyl-CoA = N(6)-biotinyl-L-lysyl-[protein] + malonyl-CoA. The protein operates within lipid metabolism; malonyl-CoA biosynthesis; malonyl-CoA from acetyl-CoA: step 1/1. Functionally, component of the acetyl coenzyme A carboxylase (ACC) complex. Biotin carboxylase (BC) catalyzes the carboxylation of biotin on its carrier protein (BCCP) and then the CO(2) group is transferred by the transcarboxylase to acetyl-CoA to form malonyl-CoA. This Syntrophomonas wolfei subsp. wolfei (strain DSM 2245B / Goettingen) protein is Acetyl-coenzyme A carboxylase carboxyl transferase subunit beta.